The chain runs to 96 residues: MLFHVEMTVNLPSDMDAERAARLKSDEKAMSQKLQQEGVWRHLWRIAGRYANISVFDVESPAHLHDVLSQLPLFPYMDVEVRALCRHASSIHDDDR.

The protein belongs to the muconolactone Delta-isomerase family. As to quaternary structure, homodecamer.

The enzyme catalyses (S)-muconolactone = (4,5-dihydro-5-oxofuran-2-yl)-acetate. Its pathway is aromatic compound metabolism; beta-ketoadipate pathway; 5-oxo-4,5-dihydro-2-furylacetate from catechol: step 3/3. In Acinetobacter lwoffii, this protein is Muconolactone Delta-isomerase 2 (catC2).